The following is a 356-amino-acid chain: DNA polymerase IV (356 aa).

The 182-residue stretch at 6–187 (IIHIDMDAFY…QPIRRLHGVG (182 aa)) folds into the UmuC domain. Mg(2+) contacts are provided by D10 and D105. Residue E106 is part of the active site.

Belongs to the DNA polymerase type-Y family. Monomer. Mg(2+) is required as a cofactor.

It is found in the cytoplasm. It catalyses the reaction DNA(n) + a 2'-deoxyribonucleoside 5'-triphosphate = DNA(n+1) + diphosphate. Functionally, poorly processive, error-prone DNA polymerase involved in untargeted mutagenesis. Copies undamaged DNA at stalled replication forks, which arise in vivo from mismatched or misaligned primer ends. These misaligned primers can be extended by PolIV. Exhibits no 3'-5' exonuclease (proofreading) activity. May be involved in translesional synthesis, in conjunction with the beta clamp from PolIII. The protein is DNA polymerase IV of Halorhodospira halophila (strain DSM 244 / SL1) (Ectothiorhodospira halophila (strain DSM 244 / SL1)).